A 447-amino-acid chain; its full sequence is Putative branched-chain amino acid carrier protein SSP1343 (447 aa).

12 helical membrane-spanning segments follow: residues 6–26 (WIIGFTLFAMFFGAGNLIFPP), 40–60 (ILAFALTGIGLPLLGVIVGAL), 74–94 (PKFSIIFLIIIYLTIGPLFAI), 116–136 (LALFIFTVIYFLIVLYLCINP), 143–163 (IGSLLTPLLLITILAMIVKGF), 192–212 (GYLTMDAIAAIAFSMIVVNAV), 228–248 (LMAGIIAAVALMFIYISLGYI), 289–309 (LLGIIVALACLTTACGLVVAV), 324–344 (IYVIIFTLISFILANQGLNSV), 349–369 (VPVLSIVYPIAITSVLLILLA), 381–401 (IPVAIVSIVSILSMIHTQGWI), and 416–436 (LEWFPIAIVTTIIGYIVAAMV).

Belongs to the branched chain amino acid transporter family.

It is found in the cell membrane. In terms of biological role, component of the transport system for branched-chain amino acids (leucine, isoleucine and valine), which is coupled to a proton motive force. The polypeptide is Putative branched-chain amino acid carrier protein SSP1343 (Staphylococcus saprophyticus subsp. saprophyticus (strain ATCC 15305 / DSM 20229 / NCIMB 8711 / NCTC 7292 / S-41)).